Here is a 213-residue protein sequence, read N- to C-terminus: Holliday junction branch migration complex subunit RuvA (213 aa).

Residues 1-64 (MIASVTGEVA…DEAPLLFGFA (64 aa)) form a domain I region. Residues 65-143 (QGDEKEIFTV…LPEPPVQQAN (79 aa)) are domain II. Residues 144–152 (QPQVPVWRD) are flexible linker. Positions 152–213 (DQVVDALTGL…GTTHAPTGRR (62 aa)) are domain III.

The protein belongs to the RuvA family. In terms of assembly, homotetramer. Forms an RuvA(8)-RuvB(12)-Holliday junction (HJ) complex. HJ DNA is sandwiched between 2 RuvA tetramers; dsDNA enters through RuvA and exits via RuvB. An RuvB hexamer assembles on each DNA strand where it exits the tetramer. Each RuvB hexamer is contacted by two RuvA subunits (via domain III) on 2 adjacent RuvB subunits; this complex drives branch migration. In the full resolvosome a probable DNA-RuvA(4)-RuvB(12)-RuvC(2) complex forms which resolves the HJ.

The protein resides in the cytoplasm. In terms of biological role, the RuvA-RuvB-RuvC complex processes Holliday junction (HJ) DNA during genetic recombination and DNA repair, while the RuvA-RuvB complex plays an important role in the rescue of blocked DNA replication forks via replication fork reversal (RFR). RuvA specifically binds to HJ cruciform DNA, conferring on it an open structure. The RuvB hexamer acts as an ATP-dependent pump, pulling dsDNA into and through the RuvAB complex. HJ branch migration allows RuvC to scan DNA until it finds its consensus sequence, where it cleaves and resolves the cruciform DNA. The sequence is that of Holliday junction branch migration complex subunit RuvA from Kocuria rhizophila (strain ATCC 9341 / DSM 348 / NBRC 103217 / DC2201).